The primary structure comprises 392 residues: Anhydro-N-acetylmuramic acid kinase (392 aa).

19–26 (GTSVDGID) serves as a coordination point for ATP.

This sequence belongs to the anhydro-N-acetylmuramic acid kinase family.

It catalyses the reaction 1,6-anhydro-N-acetyl-beta-muramate + ATP + H2O = N-acetyl-D-muramate 6-phosphate + ADP + H(+). It functions in the pathway amino-sugar metabolism; 1,6-anhydro-N-acetylmuramate degradation. The protein operates within cell wall biogenesis; peptidoglycan recycling. In terms of biological role, catalyzes the specific phosphorylation of 1,6-anhydro-N-acetylmuramic acid (anhMurNAc) with the simultaneous cleavage of the 1,6-anhydro ring, generating MurNAc-6-P. Is required for the utilization of anhMurNAc either imported from the medium or derived from its own cell wall murein, and thus plays a role in cell wall recycling. The chain is Anhydro-N-acetylmuramic acid kinase from Trichormus variabilis (strain ATCC 29413 / PCC 7937) (Anabaena variabilis).